The sequence spans 550 residues: Eukaryotic translation initiation factor 3 subunit L (550 aa).

The segment at 1–20 (MVRDSFDGGHTGDPERDLAY) is disordered. The region spanning 309 to 503 (EATKIFVNCL…IDDSTTDLDF (195 aa)) is the PCI domain.

The protein belongs to the eIF-3 subunit L family. As to quaternary structure, component of the eukaryotic translation initiation factor 3 (eIF-3) complex.

Its subcellular location is the cytoplasm. Functionally, component of the eukaryotic translation initiation factor 3 (eIF-3) complex, which is involved in protein synthesis of a specialized repertoire of mRNAs and, together with other initiation factors, stimulates binding of mRNA and methionyl-tRNAi to the 40S ribosome. The eIF-3 complex specifically targets and initiates translation of a subset of mRNAs involved in cell proliferation. This Brugia malayi (Filarial nematode worm) protein is Eukaryotic translation initiation factor 3 subunit L.